Consider the following 112-residue polypeptide: UPF0102 protein Pmob_0702 (112 aa).

This sequence belongs to the UPF0102 family.

In Petrotoga mobilis (strain DSM 10674 / SJ95), this protein is UPF0102 protein Pmob_0702.